The primary structure comprises 352 residues: Molybdenum import ATP-binding protein ModC (352 aa).

One can recognise an ABC transporter domain in the interval Met1–Glu229. Gly31–Thr38 provides a ligand contact to ATP. The 64-residue stretch at Gln289–Ala352 folds into the Mop domain.

It belongs to the ABC transporter superfamily. Molybdate importer (TC 3.A.1.8) family. The complex is composed of two ATP-binding proteins (ModC), two transmembrane proteins (ModB) and a solute-binding protein (ModA).

The protein resides in the cell inner membrane. The enzyme catalyses molybdate(out) + ATP + H2O = molybdate(in) + ADP + phosphate + H(+). In terms of biological role, part of the ABC transporter complex ModABC involved in molybdenum import. Responsible for energy coupling to the transport system. The sequence is that of Molybdenum import ATP-binding protein ModC from Escherichia coli (strain K12).